We begin with the raw amino-acid sequence, 487 residues long: UPF0324 membrane protein NE0724 (487 aa).

The next 11 membrane-spanning stretches (helical) occupy residues 19–38 (WAVWLGLIMFMASVSSLWGW), 71–93 (PALSLLVTYLVFTALTCLAAWSM), 100–119 (FFIGWTILFIMTWVIWIIGN), 139–161 (LSLGSGFSYLLALLVGLVIGNFF), 181–200 (AIVFLGIKIGVMSIEAAGFI), 204–226 (VMTGVAATFVAYMLFWPIVYALG), 269–291 (VSILVVIFAMFELIILPGFYTAI), 350–369 (IWIDMFIGVWAFVLALVWVY), 389–411 (FPKFVLGYLLVWFSYIMLASSGS), 426–443 (GPMRNMMFMLTFISIGII), and 456–478 (ALLYAIALFGIIAPIAYGVAWIF).

The protein belongs to the UPF0324 family.

It is found in the cell membrane. The chain is UPF0324 membrane protein NE0724 from Nitrosomonas europaea (strain ATCC 19718 / CIP 103999 / KCTC 2705 / NBRC 14298).